The chain runs to 267 residues: Glucosamine-6-phosphate deaminase (267 aa).

The Proton acceptor; for enolization step role is filled by aspartate 72. Residue aspartate 141 is the For ring-opening step of the active site. The Proton acceptor; for ring-opening step role is filled by histidine 143. The active-site For ring-opening step is the glutamate 148.

Belongs to the glucosamine/galactosamine-6-phosphate isomerase family. NagB subfamily. As to quaternary structure, homohexamer.

It carries out the reaction alpha-D-glucosamine 6-phosphate + H2O = beta-D-fructose 6-phosphate + NH4(+). The protein operates within amino-sugar metabolism; N-acetylneuraminate degradation; D-fructose 6-phosphate from N-acetylneuraminate: step 5/5. Allosterically activated by N-acetylglucosamine 6-phosphate (GlcNAc6P). Functionally, catalyzes the reversible isomerization-deamination of glucosamine 6-phosphate (GlcN6P) to form fructose 6-phosphate (Fru6P) and ammonium ion. The chain is Glucosamine-6-phosphate deaminase from Actinobacillus pleuropneumoniae serotype 3 (strain JL03).